The sequence spans 95 residues: RING finger protein Z (95 aa).

A lipid anchor (N-myristoyl glycine; by host) is attached at G2. The RING-type; atypical zinc finger occupies 38–74 (CKSCWFANKGLIKCSNHYLCLKCLTAMLSRSDYCGIC). The short motif at 88–91 (PSAP) is the PTAP/PSAP motif element.

Belongs to the arenaviridae Z protein family. As to quaternary structure, interacts with protein NP; this interaction probably directs the encapsidated genome to budding sites. Interacts (via RING domain) with polymerase L; this interaction inhibits viral transcription and replication, Z partially blocks the product exit tunnel for the releasing nascent RNA product. Interacts with the glycoprotein complex; this interaction plays a role in virion budding. Interacts with host eIF4E; this interaction results in eIF4E reduced affinity for its substrate, the 5'-m7 G cap structure. Interacts (via late-budding domain) with host TSG101; this interaction is essential for budding and release of viral particles. Interacts with host RPLP0; this interaction may serve to load ribosome-like particles inside the virion. Interacts with host PML; this interaction induces PML bodies redistribution in the cytoplasm upon viral infection. In terms of processing, myristoylation is required for the role of RING finger protein Z in assembly and budding.

It localises to the virion. It is found in the host cytoplasm. The protein resides in the host perinuclear region. Its subcellular location is the host cell membrane. Its function is as follows. Plays a crucial role in virion assembly and budding. Expressed late in the virus life cycle, it acts as an inhibitor of viral transcription and RNA synthesis by interacting with the viral polymerase L. Presumably recruits the NP encapsidated genome to cellular membranes at budding sites via direct interaction with NP. Plays critical roles in the final steps of viral release by interacting with host TSG101, a member of the vacuolar protein-sorting pathway and using other cellular host proteins involved in vesicle formation pathway. The budding of the virus progeny occurs after association of protein Z with the viral glycoprotein complex SSP-GP1-GP2 at the cell periphery, step that requires myristoylation of protein Z. Also selectively represses protein production by associating with host eIF4E. In cell-based minigenome assay, has an inhibitory effect on the ribonucleoprotein machinery (vRNP), which is responsible for the replication and transcription of the viral genome. The polypeptide is RING finger protein Z (Bear Canyon mammarenavirus (isolate Mouse/United States/AV A0070039/2000) (BCNV)).